An 882-amino-acid chain; its full sequence is Ubiquitin carboxyl-terminal hydrolase 4 (882 aa).

Residues 182–308 (YDSSLLLIDV…WVSKKGACET (127 aa)) enclose the Rhodanese domain. The span at 382–399 (KAKSSSTSSVTSSSPAPS) shows a compositional bias: low complexity. The interval 382 to 411 (KAKSSSTSSVTSSSPAPSQLVRPQTSSMPP) is disordered. Polar residues predominate over residues 402–411 (VRPQTSSMPP). The region spanning 519–879 (VGLENMGNSC…NAYVLFYHRV (361 aa)) is the USP domain. Cys528 functions as the Nucleophile in the catalytic mechanism. Catalysis depends on His836, which acts as the Proton acceptor.

The protein belongs to the peptidase C19 family.

Its subcellular location is the cytoplasm. It is found in the late endosome membrane. The enzyme catalyses Thiol-dependent hydrolysis of ester, thioester, amide, peptide and isopeptide bonds formed by the C-terminal Gly of ubiquitin (a 76-residue protein attached to proteins as an intracellular targeting signal).. With respect to regulation, RFU1 is an inhibitor of deubiquitination activity. In terms of biological role, ubiquitin thioesterase that acts at the late endosome/prevacuolar compartment to recover ubiquitin from ubiquitinated membrane proteins en route to the vacuole. Also removes ubiquitin from soluble proteins targeted to proteasomes. Is essential to maintain a normal level of free ubiquitin. Required for promoting coordination of DNA replication and avoids DNA overreplication. The protein is Ubiquitin carboxyl-terminal hydrolase 4 (DOA4) of Vanderwaltozyma polyspora (strain ATCC 22028 / DSM 70294 / BCRC 21397 / CBS 2163 / NBRC 10782 / NRRL Y-8283 / UCD 57-17) (Kluyveromyces polysporus).